Reading from the N-terminus, the 722-residue chain is Methionine--tRNA ligase (722 aa).

The 'HIGH' region motif lies at 11-21 (PYANGPIHAGH). 4 residues coordinate Zn(2+): Cys-143, Cys-146, Cys-156, and Cys-159. The 'KMSKS' region motif lies at 344–348 (KFSTS). Thr-347 is an ATP binding site. The tRNA-binding domain maps to 622 to 722 (DFAKLDLRVG…KEVKLGAKVR (101 aa)).

Belongs to the class-I aminoacyl-tRNA synthetase family. MetG type 1 subfamily. In terms of assembly, homodimer. Requires Zn(2+) as cofactor.

The protein resides in the cytoplasm. The enzyme catalyses tRNA(Met) + L-methionine + ATP = L-methionyl-tRNA(Met) + AMP + diphosphate. In terms of biological role, is required not only for elongation of protein synthesis but also for the initiation of all mRNA translation through initiator tRNA(fMet) aminoacylation. The sequence is that of Methionine--tRNA ligase from Pyrococcus abyssi (strain GE5 / Orsay).